The sequence spans 573 residues: Pentatricopeptide repeat-containing protein At3g62890 (573 aa).

PPR repeat units follow at residues 23–60 (ESFLWNIIIRAIVHNVSSPQRHSPISVYLRMRNHRVSP), 61–95 (DFHTFPFLLPSFHNPLHLPLGQRTHAQILLFGLDK), 96–126 (DPFVRTSLLNMYSSCGDLRSAQRVFDDSGSK), 127–161 (DLPAWNSVVNAYAKAGLIDDARKLFDEMPERNVIS), 162–188 (WSCLINGYVMCGKYKEALDLFREMQLP), 198–232 (NEFTMSTVLSACGRLGALEQGKWVHAYIDKYHVEI), 233–263 (DIVLGTALIDMYAKCGSLERAKRVFNALGSK), 265–295 (DVKAYSAMICCLAMYGLTDECFQLFSEMTTS), 301–336 (NSVTFVGILGACVHRGLINEGKSYFKMMIEEFGITP), and 337–367 (SIQHYGCMVDLYGRSGLIKEAESFIASMPME). The segment at 372–447 (IWGSLLSGSR…VPGCSYVEVE (76 aa)) is type E motif; degenerate. The tract at residues 448 to 478 (GVVHEFVVGDESQQESERIYAMLDEIMQRLR) is type E(+) motif. The interval 479–573 (EAGYVTDTKE…DGSCSCRDFW (95 aa)) is type DYW motif.

The protein belongs to the PPR family. PCMP-H subfamily.

This Arabidopsis thaliana (Mouse-ear cress) protein is Pentatricopeptide repeat-containing protein At3g62890 (PCMP-H82).